Here is a 278-residue protein sequence, read N- to C-terminus: Elongation factor Ts (278 aa).

The involved in Mg(2+) ion dislocation from EF-Tu stretch occupies residues Thr82 to Val85.

Belongs to the EF-Ts family.

The protein localises to the cytoplasm. In terms of biological role, associates with the EF-Tu.GDP complex and induces the exchange of GDP to GTP. It remains bound to the aminoacyl-tRNA.EF-Tu.GTP complex up to the GTP hydrolysis stage on the ribosome. The chain is Elongation factor Ts from Streptomyces griseus subsp. griseus (strain JCM 4626 / CBS 651.72 / NBRC 13350 / KCC S-0626 / ISP 5235).